An 85-amino-acid polypeptide reads, in one-letter code: Translation initiation factor IF-1 (85 aa).

Positions 1–72 (MAKEELIEMH…SKGRITFRHI (72 aa)) constitute an S1-like domain.

The protein belongs to the IF-1 family. As to quaternary structure, component of the 30S ribosomal translation pre-initiation complex which assembles on the 30S ribosome in the order IF-2 and IF-3, IF-1 and N-formylmethionyl-tRNA(fMet); mRNA recruitment can occur at any time during PIC assembly.

It localises to the cytoplasm. One of the essential components for the initiation of protein synthesis. Stabilizes the binding of IF-2 and IF-3 on the 30S subunit to which N-formylmethionyl-tRNA(fMet) subsequently binds. Helps modulate mRNA selection, yielding the 30S pre-initiation complex (PIC). Upon addition of the 50S ribosomal subunit IF-1, IF-2 and IF-3 are released leaving the mature 70S translation initiation complex. The protein is Translation initiation factor IF-1 of Polaromonas naphthalenivorans (strain CJ2).